A 214-amino-acid polypeptide reads, in one-letter code: Probable chorismate pyruvate-lyase (214 aa).

Substrate contacts are provided by Arg-74, Leu-112, and Glu-173. The interval Ala-183 to Ser-214 is disordered. A compositionally biased stretch (basic and acidic residues) spans Arg-197 to Ser-214.

This sequence belongs to the UbiC family.

The protein localises to the cytoplasm. The catalysed reaction is chorismate = 4-hydroxybenzoate + pyruvate. It functions in the pathway cofactor biosynthesis; ubiquinone biosynthesis. Its function is as follows. Removes the pyruvyl group from chorismate, with concomitant aromatization of the ring, to provide 4-hydroxybenzoate (4HB) for the ubiquinone pathway. This Cupriavidus metallidurans (strain ATCC 43123 / DSM 2839 / NBRC 102507 / CH34) (Ralstonia metallidurans) protein is Probable chorismate pyruvate-lyase.